Here is a 159-residue protein sequence, read N- to C-terminus: Keratin-associated protein 9-8 (159 aa).

15 tandem repeats follow at residues 8-12, 13-17, 32-36, 37-41, 46-50, 51-55, 56-60, 65-69, 70-74, 75-79, 80-84, 129-133, 134-138, 139-142, and 153-157. Residues 8-157 form a 15 X 5 AA repeats of C-C-[RQVSGE]-[SPSNQ]-[TASPI] region; that stretch reads CCQPTCCRTT…TCVSSCCQPS (150 aa).

It belongs to the KRTAP type 9 family. In terms of assembly, interacts with hair keratins.

In the hair cortex, hair keratin intermediate filaments are embedded in an interfilamentous matrix, consisting of hair keratin-associated proteins (KRTAP), which are essential for the formation of a rigid and resistant hair shaft through their extensive disulfide bond cross-linking with abundant cysteine residues of hair keratins. The matrix proteins include the high-sulfur and high-glycine-tyrosine keratins. This is Keratin-associated protein 9-8 (KRTAP9-8) from Homo sapiens (Human).